Here is a 622-residue protein sequence, read N- to C-terminus: Condensin-2 complex subunit H2 (622 aa).

Threonine 19 carries the post-translational modification Phosphothreonine. A phosphoserine mark is found at serine 95, serine 199, serine 223, and serine 227. Residues 207–354 are disordered; the sequence is WNPKEPGRAE…PGQKRKRKGA (148 aa). Positions 262 to 273 are enriched in low complexity; sequence AAEPPEASAPEV. The residue at position 282 (serine 282) is a Phosphoserine. Positions 294–312 are enriched in basic and acidic residues; that stretch reads TLRERKEAPEPASRLKDTP.

Belongs to the CND2 H2 (condensin-2 subunit 2) family. Component of the condensin-2 complex, which contains the SMC2 and SMC4 heterodimer, and three non SMC subunits, NCAPG2, NCAPH2 and NCAPD3 that probably regulate the complex.

The protein resides in the nucleus. Functionally, regulatory subunit of the condensin-2 complex, a complex that seems to provide chromosomes with an additional level of organization and rigidity and in establishing mitotic chromosome architecture. May promote the resolution of double-strand DNA catenanes (intertwines) between sister chromatids. Condensin-mediated compaction likely increases tension in catenated sister chromatids, providing directionality for type II topoisomerase-mediated strand exchanges toward chromatid decatenation. Required for decatenation of chromatin bridges at anaphase. Early in neurogenesis, may play an essential role to ensure accurate mitotic chromosome condensation in neuron stem cells, ultimately affecting neuron pool and cortex size. Seems to have lineage-specific role in T-cell development. This Bos taurus (Bovine) protein is Condensin-2 complex subunit H2 (NCAPH2).